The chain runs to 104 residues: Large ribosomal subunit protein uL24 (104 aa).

The protein belongs to the universal ribosomal protein uL24 family. As to quaternary structure, part of the 50S ribosomal subunit.

Functionally, one of two assembly initiator proteins, it binds directly to the 5'-end of the 23S rRNA, where it nucleates assembly of the 50S subunit. Its function is as follows. One of the proteins that surrounds the polypeptide exit tunnel on the outside of the subunit. This is Large ribosomal subunit protein uL24 from Buchnera aphidicola subsp. Schizaphis graminum (strain Sg).